The following is a 117-amino-acid chain: Flagellar transcriptional regulator FlhD (117 aa).

The protein belongs to the FlhD family. Homodimer; disulfide-linked. Forms a heterohexamer composed of two FlhC and four FlhD subunits. Each FlhC binds a FlhD dimer, forming a heterotrimer, and a hexamer assembles by dimerization of two heterotrimers.

The protein localises to the cytoplasm. Its function is as follows. Functions in complex with FlhC as a master transcriptional regulator that regulates transcription of several flagellar and non-flagellar operons by binding to their promoter region. Activates expression of class 2 flagellar genes, including fliA, which is a flagellum-specific sigma factor that turns on the class 3 genes. Also regulates genes whose products function in a variety of physiological pathways. The sequence is that of Flagellar transcriptional regulator FlhD from Photorhabdus laumondii subsp. laumondii (strain DSM 15139 / CIP 105565 / TT01) (Photorhabdus luminescens subsp. laumondii).